We begin with the raw amino-acid sequence, 891 residues long: Valine--tRNA ligase (891 aa).

The 'HIGH' region motif lies at 43–53; that stretch reads PFTSGTLHLGH. Positions 536-540 match the 'KMSKS' region motif; the sequence is KMSKS. Lysine 539 serves as a coordination point for ATP.

It belongs to the class-I aminoacyl-tRNA synthetase family. ValS type 2 subfamily.

The protein localises to the cytoplasm. The enzyme catalyses tRNA(Val) + L-valine + ATP = L-valyl-tRNA(Val) + AMP + diphosphate. Functionally, catalyzes the attachment of valine to tRNA(Val). As ValRS can inadvertently accommodate and process structurally similar amino acids such as threonine, to avoid such errors, it has a 'posttransfer' editing activity that hydrolyzes mischarged Thr-tRNA(Val) in a tRNA-dependent manner. This Pyrococcus horikoshii (strain ATCC 700860 / DSM 12428 / JCM 9974 / NBRC 100139 / OT-3) protein is Valine--tRNA ligase.